A 312-amino-acid chain; its full sequence is Methionyl-tRNA formyltransferase (312 aa).

(6S)-5,6,7,8-tetrahydrofolate is bound at residue 109–112 (SLLP).

It belongs to the Fmt family.

The catalysed reaction is L-methionyl-tRNA(fMet) + (6R)-10-formyltetrahydrofolate = N-formyl-L-methionyl-tRNA(fMet) + (6S)-5,6,7,8-tetrahydrofolate + H(+). Functionally, attaches a formyl group to the free amino group of methionyl-tRNA(fMet). The formyl group appears to play a dual role in the initiator identity of N-formylmethionyl-tRNA by promoting its recognition by IF2 and preventing the misappropriation of this tRNA by the elongation apparatus. This Listeria welshimeri serovar 6b (strain ATCC 35897 / DSM 20650 / CCUG 15529 / CIP 8149 / NCTC 11857 / SLCC 5334 / V8) protein is Methionyl-tRNA formyltransferase.